Here is a 446-residue protein sequence, read N- to C-terminus: Gasdermin-A (446 aa).

The triggers pyroptosis stretch occupies residues 1–252 (MTMFENVTRA…FILIQASDVG (252 aa)). Residue 9-13 (RALAR) coordinates a cardiolipin. Transmembrane regions (beta stranded) follow at residues 78–95 (NFSF…DVDV), 99–120 (VKVK…TLSV), 164–180 (VTLE…SLPF), and 184–198 (LGLQ…AVTI).

Belongs to the gasdermin family. In terms of assembly, homooligomer; homooligomeric ring-shaped pore complex containing 18-36 subunits when inserted in the membrane. Post-translationally, cleavage by bacterial SpeB relieves autoinhibition by releasing the N-terminal moiety (Gasdermin-A, N-terminal) that initiates pyroptosis. In terms of processing, palmitoylated. In terms of tissue distribution, expressed predominantly in the gastrointestinal (GI) tract and in the skin at a lower level. In the GI tract, the expression is highly restricted to the esophagus and forestomach.

It is found in the cytoplasm. Its subcellular location is the perinuclear region. The protein localises to the cytosol. It localises to the cell membrane. With respect to regulation, the full-length protein before cleavage is inactive: intramolecular interactions between N- and C-terminal domains mediate autoinhibition in the absence of activation signal. The intrinsic pyroptosis-inducing activity is carried by the released N-terminal moiety (Gasdermin-A, N-terminal) following cleavage by bacterial effector protein SpeB. Functionally, this form constitutes the precursor of the pore-forming protein and acts as a sensor of bacterial infection: upon infection, specifically cleaved by bacterial effector protein SpeB in epithelial cells, releasing the N-terminal moiety (Gasdermin-A, N-terminal) that binds to membranes and forms pores, triggering pyroptosis. Its function is as follows. Pore-forming protein that causes membrane permeabilization and pyroptosis. Released upon cleavage by bacterial effector protein SpeB, and binds to membrane inner leaflet lipids. Homooligomerizes within the membrane and forms pores of 10-15 nanometers (nm) of inner diameter, triggering pyroptosis. Pyroptosis triggers the elimination of the infected skin cell, depriving the pathogen of its protective niche, while inducing an inflammatory response. This ultimately prevents bacterial penetration of the epithelial barrier and a subsequent systemic dissemination of the pathogen. Binds to cardiolipin and other acidic phospholipids, such as phosphatidylserine, which mediate its targeting to the inner leaflet membrane. The chain is Gasdermin-A (Gsdma) from Mus musculus (Mouse).